Reading from the N-terminus, the 149-residue chain is Deoxyuridine 5'-triphosphate nucleotidohydrolase (149 aa).

Residues 68–70 (RSG), Asn-81, 85–87 (LID), and Met-95 each bind substrate.

Belongs to the dUTPase family. It depends on Mg(2+) as a cofactor.

The enzyme catalyses dUTP + H2O = dUMP + diphosphate + H(+). The protein operates within pyrimidine metabolism; dUMP biosynthesis; dUMP from dCTP (dUTP route): step 2/2. Its function is as follows. This enzyme is involved in nucleotide metabolism: it produces dUMP, the immediate precursor of thymidine nucleotides and it decreases the intracellular concentration of dUTP so that uracil cannot be incorporated into DNA. The polypeptide is Deoxyuridine 5'-triphosphate nucleotidohydrolase (Albidiferax ferrireducens (strain ATCC BAA-621 / DSM 15236 / T118) (Rhodoferax ferrireducens)).